The chain runs to 501 residues: Mitochondrial inner membrane i-AAA protease supercomplex subunit MGR3 (501 aa).

Residues 1-77 (MLLQGMRLSQ…PKPNLKKKNR (77 aa)) lie on the Mitochondrial matrix side of the membrane. The segment at 39–72 (RPPASNFNTQESAPIPESPANSPTRPQMAPKPNL) is disordered. The chain crosses the membrane as a helical span at residues 78–95 (SLMYSIIGVSIVGLYFWF). At 96-501 (KSNSRKQKLP…LKAAKKEGLN (406 aa)) the chain is on the mitochondrial intermembrane side. TPR repeat units follow at residues 109–144 (QKVW…CDRS), 154–187 (TRIE…FFEA), 386–420 (GTYI…AKRN), and 440–473 (ALST…AKET).

Belongs to the MGR3 family. In terms of assembly, component of the mitochondrial inner membrane i-AAA protease supercomplex composed of MGR1, MGR3 and YME1. With MGR1, forms a subcomplex that binds to YME1 and to substrates to facilitate proteolysis.

The protein localises to the mitochondrion inner membrane. Functionally, component of the mitochondrial inner membrane i-AAA protease supercomplex, which degrades misfolded mitochondrial proteins. Together with MGR1, functions in an adapter complex that targets substrates to the i-AAA protease for degradation. Required for growth of cells lacking the mitochondrial genome. This Saccharomyces cerevisiae (strain ATCC 204508 / S288c) (Baker's yeast) protein is Mitochondrial inner membrane i-AAA protease supercomplex subunit MGR3 (MGR3).